Consider the following 298-residue polypeptide: Acetylglutamate kinase (298 aa).

Residues 69–70, R91, and N196 each bind substrate; that span reads GG.

It belongs to the acetylglutamate kinase family. ArgB subfamily.

Its subcellular location is the cytoplasm. It carries out the reaction N-acetyl-L-glutamate + ATP = N-acetyl-L-glutamyl 5-phosphate + ADP. Its pathway is amino-acid biosynthesis; L-arginine biosynthesis; N(2)-acetyl-L-ornithine from L-glutamate: step 2/4. Functionally, catalyzes the ATP-dependent phosphorylation of N-acetyl-L-glutamate. The protein is Acetylglutamate kinase of Bradyrhizobium sp. (strain ORS 278).